A 200-amino-acid chain; its full sequence is Phospholipase A2 inhibitor NAI (200 aa).

The signal sequence occupies residues 1–19; sequence MKSLLFCCLFGTFLATGMC. Disulfide bonds link Cys22–Cys46, Cys25–Cys32, Cys39–Cys67, Cys73–Cys94, Cys95–Cys100, Cys120–Cys145, Cys138–Cys165, and Cys171–Cys191.

It belongs to the CNF-like-inhibitor family. In terms of assembly, heterotrimer of 2 subunits A and 1 subunit B; non-covalently linked. In terms of tissue distribution, expressed by the liver.

It localises to the secreted. Functionally, inhibits the enzymatic activity of all phospholipase A2 tested, binding with micromole to nanomole affinity. In Notechis ater (Black tiger snake), this protein is Phospholipase A2 inhibitor NAI.